The chain runs to 29 residues: Dermaseptin-H7 (29 aa).

Position 29 is a leucine amide (Leu29).

It belongs to the frog skin active peptide (FSAP) family. Dermaseptin subfamily. As to expression, expressed by the skin glands.

The protein resides in the secreted. In terms of biological role, has antibacterial activity against the Gram-negative bacterium E.coli and the Gram-positive bacterium S.aureus. Has antiprotozoal activity against L.amazonensis. Has antifungal activity. Has no hemolytic activity. This Pithecopus hypochondrialis (Orange-legged leaf frog) protein is Dermaseptin-H7.